A 105-amino-acid polypeptide reads, in one-letter code: Synaptic plasticity regulator PANTS (105 aa).

This sequence belongs to the UPF0545 family. As to quaternary structure, interacts with RTN4 isoform A/Nogo-A; the interaction results in enhanced RTN4-mediated inhibition of AMPA receptor clustering. Also interacts with NCAM1, RANBP2 and CCT8. In terms of processing, rapidly degraded by proteolysis following neuronal stimulation, resulting in increased AMPA receptor clustering.

It localises to the synapse. It is found in the synaptic cleft. Negatively regulates long-term potentiation and modulates adult synaptic plasticity. Stabilizes the interaction of RTN4 isoform A/Nogo-A with its receptors, inhibiting clustering of postsynaptic AMPA receptors at synaptic sites. Upon neuronal stimulation, degraded at synapses, reducing RTN4 signaling and allowing AMPA receptor clustering at individual synapses. This chain is Synaptic plasticity regulator PANTS (C22orf39), found in Homo sapiens (Human).